The following is a 92-amino-acid chain: DNA-directed RNA polymerase subunit Rpo11 (92 aa).

This sequence belongs to the archaeal Rpo11/eukaryotic RPB11/RPC19 RNA polymerase subunit family. In terms of assembly, part of the RNA polymerase complex.

The protein localises to the cytoplasm. The enzyme catalyses RNA(n) + a ribonucleoside 5'-triphosphate = RNA(n+1) + diphosphate. Functionally, DNA-dependent RNA polymerase (RNAP) catalyzes the transcription of DNA into RNA using the four ribonucleoside triphosphates as substrates. The chain is DNA-directed RNA polymerase subunit Rpo11 from Pyrobaculum aerophilum (strain ATCC 51768 / DSM 7523 / JCM 9630 / CIP 104966 / NBRC 100827 / IM2).